A 519-amino-acid chain; its full sequence is Dideacetyl fusicoccin A C-19 hydroxylase (519 aa).

The helical transmembrane segment at 16-36 threads the bilayer; it reads LPVAPILFTALAATIGAFLLS. N-linked (GlcNAc...) asparagine glycosylation is found at asparagine 177, asparagine 327, asparagine 414, and asparagine 432. Cysteine 454 contacts heme.

It belongs to the cytochrome P450 family. Heme is required as a cofactor.

It localises to the membrane. Its pathway is mycotoxin biosynthesis. Cytochrome P450 monooxygenase; part of the 2 gene clusters that mediate the biosynthesis of fusicoccins, diterpene glucosides that display phytohormone-like activity and function as potent activators of plasma membrane H(+)-ATPases in plants by modifying 14-3-3 proteins and cause the plant disease constriction canker. The first step in the pathway is performed by the fusicoccadiene synthase PaFS that possesses both prenyl transferase and terpene cyclase activity, converting isopentenyl diphosphate and dimethylallyl diphosphate into geranylgeranyl diphosphate (GGDP) and successively converting GGDP into fusicocca-2,10(14)-diene, a precursor for fusicoccin H. The second step is the oxidation at the C-8 position by the cytochrome P450 monooxygenase PaP450-2 to yield fusicocca-2,10(14)-diene-8-beta-ol. The cytochrome P450 monooxygenase PaP450-1 then catalyzes the hydroxylation at the C-16 position to produce fusicocca-2,10(14)-diene-8-beta,16-diol. The dioxygenase fc-dox then catalyzes the 16-oxydation of fusicocca-2,10(14)-diene-8-beta,16-diol to yield an aldehyde (8-beta-hydroxyfusicocca-1,10(14)-dien-16-al). The short-chain dehydrogenase/reductase fc-sdr catalyzes the reduction of the aldehyde to yield fusicocca-1,10(14)-diene-8-beta,16-diol. The next step is the hydroxylation at C-9 performed by the cytochrome P450 monooxygenase PaP450-3 that leads to fusicoccin H aglycon which is glycosylated to fusicoccin H by the O-glycosyltransferase PaGT. Hydroxylation at C-12 by the cytochrome P450 monooxygenase PaP450-4 leads then to the production of fusicoccin Q and is followed by methylation by the O-methyltransferase PaMT to yield fusicoccin P. Fusicoccin P is further converted to fusicoccin J via prenylation by the O-glucose prenyltransferase PaPT. Cytochrome P450 monooxygenase PaP450-5 then performs hydroxylation at C-19 to yield dideacetyl-fusicoccin A which is acetylated to 3'-O-deacetyl-fusicoccin A by the O-acetyltransferase PaAT-2. Finally, a another acetylation by the O-acetyltransferase PaAT-1 yields fusicoccin A. This is Dideacetyl fusicoccin A C-19 hydroxylase from Phomopsis amygdali (Fusicoccum amygdali).